We begin with the raw amino-acid sequence, 133 residues long: S-adenosylmethionine decarboxylase proenzyme (133 aa).

Ser-64 (schiff-base intermediate with substrate; via pyruvic acid) is an active-site residue. Position 64 is a pyruvic acid (Ser); by autocatalysis (Ser-64). The active-site Proton acceptor; for processing activity is His-69. The active-site Proton donor; for catalytic activity is Cys-84.

This sequence belongs to the prokaryotic AdoMetDC family. Type 1 subfamily. Heterotetramer of two alpha and two beta chains arranged as a dimer of alpha/beta heterodimers. Pyruvate serves as cofactor. In terms of processing, is synthesized initially as an inactive proenzyme. Formation of the active enzyme involves a self-maturation process in which the active site pyruvoyl group is generated from an internal serine residue via an autocatalytic post-translational modification. Two non-identical subunits are generated from the proenzyme in this reaction, and the pyruvate is formed at the N-terminus of the alpha chain, which is derived from the carboxyl end of the proenzyme. The post-translation cleavage follows an unusual pathway, termed non-hydrolytic serinolysis, in which the side chain hydroxyl group of the serine supplies its oxygen atom to form the C-terminus of the beta chain, while the remainder of the serine residue undergoes an oxidative deamination to produce ammonia and the pyruvoyl group blocking the N-terminus of the alpha chain.

It carries out the reaction S-adenosyl-L-methionine + H(+) = S-adenosyl 3-(methylsulfanyl)propylamine + CO2. The protein operates within amine and polyamine biosynthesis; S-adenosylmethioninamine biosynthesis; S-adenosylmethioninamine from S-adenosyl-L-methionine: step 1/1. In terms of biological role, catalyzes the decarboxylation of S-adenosylmethionine to S-adenosylmethioninamine (dcAdoMet), the propylamine donor required for the synthesis of the polyamines spermine and spermidine from the diamine putrescine. The sequence is that of S-adenosylmethionine decarboxylase proenzyme from Sulfurihydrogenibium sp. (strain YO3AOP1).